We begin with the raw amino-acid sequence, 204 residues long: COBRA-like protein 5 (204 aa).

The first 24 residues, 1-24 (MESLFSTMIVLLLVSFSCLISTEA), serve as a signal peptide directing secretion. Residues Asn31 and Asn195 are each glycosylated (N-linked (GlcNAc...) asparagine).

Belongs to the COBRA family. Expressed in roots, stems, leaves, flowers and siliques.

This chain is COBRA-like protein 5 (COBL5), found in Arabidopsis thaliana (Mouse-ear cress).